The following is a 129-amino-acid chain: Venom CUB domain-containing protein 1 (129 aa).

The signal sequence occupies residues 1-18 (MKLLGVLITIYCIASTLA). The region spanning 19-121 (IDVNVPSNGM…KASCKAYSIT (103 aa)) is the CUB domain. An intrachain disulfide couples Cys66 to Cys83.

The protein belongs to the venom CUB family. Contains 2 disulfide bonds. Expressed by the venom gland.

The protein localises to the secreted. The polypeptide is Venom CUB domain-containing protein 1 (Platymeris rhadamanthus (Red spot assassin bug)).